Reading from the N-terminus, the 1976-residue chain is MILKYSLLGNLLLLWINIVNSVVMVGLYYGFLTTFSIGPSYLLLLRTRVMKEGSEKEVSATTAFIMGQFIVFISTYYPPLHLALSRPHTLTVLVIPYLLSHFWFFWNNKKSLFDYRSTHGNFIPNLSIQYVFLNNLIFQLFNHFVLPSSTLTRLVDISMFRYNNKILFVTSSFFGWLIGHMLLMKCIGLVLSWPWEKMRSNALFRSNKYLMSKWRNSVSQIFSILLFIICICYLGRMPSPIITKKLKESSKREEKKKTEEEGNVEIERVSKTNKIKQEEDGSVEEDLSISLEMEERWNLYKKIYETEEIWLNGKEKDEFDLKEKEKNKLLGIEKSLLSLLFDYQRWNRPLRYIENDRFSNAVRNEMSQSFFYTCASDGKQRISFTYPPSLSTFFEMIKKKMSFRTAEKLPAEDLSNEWVSTTKKQRDNLRNEFINRIEAIDKGSLILNVVEKRARLCNDEEEQECLPKFYDPLLNGPYRGTRKKGYLYSIRNDSTTSTRGSTKTAWINKIHAILFSKDYREFEREFEHEMYKLGVKSSSTGIEDSSVSIGEFTEEAEEAEKSRTRFKQFAFGGEEKVFEKVFDMVRADPNDQKISNLPIEEIKKKVPRWLYKLTSDLDFEEEEEEEEEDDQEESTDDHGIRSRKGKRVVIYTDTNQGTNIINTTNNIIKTHDNIIKTTNDNIIKTTTDNIINTNDNIIKTTDNIINTNDNIIKTTDNIINTNDNIIKTTDSNREKNSDDKVENGDQAEENEMALIRYSQQSDFRRDLIKGSMRAQRRKTVTWEMFQTDAHSPLFFDRIDKTPLFSFDISRMMNLIFRNWMEEKSPKMKTSSYVGEGAKEKEKIEEEHEEEKGEYKRKEDKRQEEERIAIAETWDNIIFAQAIRGSILVTHSILRKYIVLPSLIIVKNIGRMLLFQFPEWYEDFNEWSREMHVKCTYNGVQLSETEFPKDWLTDGIQIKILFPFSLKPWHRSKLRSHHKDLRKKQKNFCFLTIWGMETELPFGSPRKKPFFFEPIHKAFEKKIIKVKKKGFFFLIIIKDNIKGFIKILNEKIRWIIKIVLFIKIKVKEVFFFFVLRRVSDPSQNEEPSKNEKDSKISNRIIHESPIRIVSRDWTNDSLIEIKINDLADKTTKIWDQVEKIRKDKKKKPLTPDIEDIDISTNKGNCSNKRTESRKHIWQISKKRRSARLISKWDSFMKSFIERIYMSILLCITNIYRIYVQFFLDSTKKTLNGYTYNDEIKEKDTNEPNPNIIPFISTVKSLSTYTTNISSDSNSPIYCDLSSLSQAYVFYKLLQTQVSNKYKSESIFHYYRTYPFIKDGIKDYFHDYFHTRGIFDSESKHKKLRNSGMSEWKNWLKSHYQYNLSHDKWSRLAPLKWRKKVNQHRTIQNNDSPKSGSYEEKDQLIHSGKKDYSKLGLLKSPSREMKSPSREKKIKKHYRYDLLSYKYLNYEDVKDSNIYGSPLQVNRHGEISNYNTHKYKSFYAITINDSLEDKYTIDRDQNLDRKYFELRITNFDPRNNIETRTSTDIGTFINKKKKTTKTGTNKKDILSLYIRIHQEIQTKQKEFFFDWMGMNEQMLDRTISNLRPWFLPEFVPLYDRYTTNPWIIPINLILFDFHGNKTSDLYIDPKVESNQKERFHPKPKVESNQKGYLELENRNRDEKERQHQGNLISDIRNKKKDVGANSAGSDIKKRRKKKKFKSKKEAELDLFLKKYFIFQLRWDDPFNKGMNNNIKVYCLLLRLMNPNEIAISSIQSGEMGLDVMLINRGFSLPELIKKGIFLIEPVRLSIKRDGISIMYQTIAISLTHKIQHQTNQGYQLKKYIDKNYFNGSIARHGGVRVNGDNNNYDLLVPEHILSPSHRRELRILSRFNYRNRNLVNKNPVFCNRAKTNAQGFEKFVNRDKHFHTDTNNSLKWKVFLWPTHRLEDLACMNRYWFDTNNGSRFSMSRIHMYQQFGIRGCYSQFPSLSRAWYMRTCK.

A run of 6 helical transmembrane segments spans residues leucine 11–phenylalanine 31, phenylalanine 64–leucine 84, proline 87–asparagine 107, leucine 126–leucine 146, phenylalanine 173–tryptophan 193, and isoleucine 221–isoleucine 241. Positions phenylalanine 619–threonine 635 are enriched in acidic residues. 2 disordered regions span residues phenylalanine 619–serine 642 and serine 830–arginine 861. The segment covering glycine 836–arginine 861 has biased composition (basic and acidic residues). The next 2 helical transmembrane spans lie at isoleucine 1054–leucine 1074 and isoleucine 1202–leucine 1222. Residues glutamine 1633–histidine 1665 are compositionally biased toward basic and acidic residues. Residues glutamine 1633–leucine 1669 form a disordered region.

The protein belongs to the TIC214 family. In terms of assembly, part of the Tic complex.

It is found in the plastid. Its subcellular location is the chloroplast inner membrane. In terms of biological role, involved in protein precursor import into chloroplasts. May be part of an intermediate translocation complex acting as a protein-conducting channel at the inner envelope. The protein is Protein TIC 214 of Nymphaea alba (White water-lily).